Here is a 251-residue protein sequence, read N- to C-terminus: NADPH-dependent oxidoreductase (251 aa).

Belongs to the flavin oxidoreductase frp family. Requires FMN as cofactor.

In terms of biological role, reduces FMN, organic nitro compounds and disulfide DTNB. Involved in maintenance of the cellular redox state and the disulfide stress response. The polypeptide is NADPH-dependent oxidoreductase (nfrA) (Staphylococcus epidermidis (strain ATCC 35984 / DSM 28319 / BCRC 17069 / CCUG 31568 / BM 3577 / RP62A)).